Consider the following 992-residue polypeptide: Disks large-associated protein 4 (992 aa).

Residues 1–20 (MKGLGDSRPRHLSDSLDPPH) show a composition bias toward basic and acidic residues. Disordered regions lie at residues 1–31 (MKGLGDSRPRHLSDSLDPPHEPLFAGPDRNP) and 154–226 (APSM…ASGL). A compositionally biased stretch (gly residues) spans 162–171 (GKVGGNGGKK). A compositionally biased stretch (basic and acidic residues) spans 172–194 (GVLEDGKGRRAKSKERAKAGEPK). A compositionally biased stretch (polar residues) spans 199 to 208 (SNISGWWSSD). A phosphoserine mark is found at Ser-206 and Ser-207. Residue Arg-290 is modified to Omega-N-methylarginine. 5 disordered regions span residues 342-435 (TTLL…SWEE), 527-665 (SVSL…RKLS), 677-751 (VPKE…GPRQ), 763-798 (SYGDNSDPALEASSLPPPDPWMETSSSSPAEPAQPG), and 915-992 (TPEK…QTRL). 7 positions are modified to phosphoserine: Ser-377, Ser-380, Ser-384, Ser-388, Ser-405, Ser-415, and Ser-421. Residues 399–413 (LRATQQSLGEQSNPR) are compositionally biased toward polar residues. A compositionally biased stretch (low complexity) spans 528-554 (VSLQSLSPPPSTGSLSNSRTLPSSSCL). The segment covering 576-591 (VTVQSSTESAQDTYLD) has biased composition (polar residues). 6 positions are modified to phosphoserine: Ser-580, Ser-581, Ser-609, Ser-611, Ser-665, and Ser-744. Residues 600 to 620 (TSQSGLSNSSDSLDSSTRPPS) show a composition bias toward low complexity. Position 915 is a phosphothreonine (Thr-915). Composition is skewed to basic and acidic residues over residues 915-925 (TPEKRKEEKKP) and 940-958 (VSRDKASDAGDKQRQEARK). Positions 969–978 (VRQNSATESA) are enriched in polar residues. Ser-973 is subject to Phosphoserine.

It belongs to the SAPAP family. As to quaternary structure, interacts with DLG1 and DLG4/PSD-95. In terms of tissue distribution, expressed in brain.

It is found in the membrane. Functionally, may play a role in the molecular organization of synapses and neuronal cell signaling. Could be an adapter protein linking ion channel to the subsynaptic cytoskeleton. May induce enrichment of PSD-95/SAP90 at the plasma membrane. This chain is Disks large-associated protein 4 (Dlgap4), found in Rattus norvegicus (Rat).